A 144-amino-acid chain; its full sequence is Eukaryotic translation initiation factor 1A, Y-chromosomal (144 aa).

The span at 1 to 15 (MPKNKGKGGKNRRRG) shows a compositional bias: basic residues. The interval 1–26 (MPKNKGKGGKNRRRGKNENESEKREL) is disordered. Residues 16 to 26 (KNENESEKREL) show a composition bias toward basic and acidic residues. The region spanning 22-96 (EKRELVFKED…NKADVILKYN (75 aa)) is the S1-like domain. Lysine 88 is covalently cross-linked (Glycyl lysine isopeptide (Lys-Gly) (interchain with G-Cter in ubiquitin)). Residues 114-144 (KINETDTFGPGDDDEVQFDDIGDDDEDIDDI) form a disordered region. The span at 124–144 (GDDDEVQFDDIGDDDEDIDDI) shows a compositional bias: acidic residues.

Belongs to the eIF-1A family. Component of the 43S pre-initiation complex (43S PIC), which is composed of the 40S ribosomal subunit, EIF1, eIF1A (EIF1AX), eIF3 complex, EIF5 and eIF2-GTP-initiator tRNA complex (eIF2 ternary complex). Interacts with EIF5; this interaction contributes to the maintenance of EIF1 within the open 43S PIC. Interacts through its C-terminal domain (CTD) with the CTD of EIF5B; from the location of the start codon by the 43S complex until the formation of the 80S complex. Ubiquitous.

It localises to the cytoplasm. Component of the 43S pre-initiation complex (43S PIC), which binds to the mRNA cap-proximal region, scans mRNA 5'-untranslated region, and locates the initiation codon. This protein enhances formation of the cap-proximal complex. Together with EIF1, facilitates scanning, start codon recognition, promotion of the assembly of 48S complex at the initiation codon (43S PIC becomes 48S PIC after the start codon is reached), and dissociation of aberrant complexes. After start codon location, together with EIF5B orients the initiator methionine-tRNA in a conformation that allows 60S ribosomal subunit joining to form the 80S initiation complex. Is released after 80S initiation complex formation, just after GTP hydrolysis by EIF5B, and before release of EIF5B. Its globular part is located in the A site of the 40S ribosomal subunit. Its interaction with EIF5 during scanning contribute to the maintenance of EIF1 within the open 43S PIC. In contrast to yeast orthologs, does not bind EIF1. The sequence is that of Eukaryotic translation initiation factor 1A, Y-chromosomal (EIF1AY) from Pan troglodytes (Chimpanzee).